The sequence spans 189 residues: Pyridoxal 5'-phosphate synthase subunit PdxT (189 aa).

Residue glycine 50–serine 52 coordinates L-glutamine. Cysteine 80 acts as the Nucleophile in catalysis. L-glutamine contacts are provided by residues arginine 107 and isoleucine 134–arginine 135. Residues histidine 169 and glutamate 171 each act as charge relay system in the active site.

The protein belongs to the glutaminase PdxT/SNO family. In terms of assembly, in the presence of PdxS, forms a dodecamer of heterodimers. Only shows activity in the heterodimer.

The catalysed reaction is aldehydo-D-ribose 5-phosphate + D-glyceraldehyde 3-phosphate + L-glutamine = pyridoxal 5'-phosphate + L-glutamate + phosphate + 3 H2O + H(+). It carries out the reaction L-glutamine + H2O = L-glutamate + NH4(+). The protein operates within cofactor biosynthesis; pyridoxal 5'-phosphate biosynthesis. Its function is as follows. Catalyzes the hydrolysis of glutamine to glutamate and ammonia as part of the biosynthesis of pyridoxal 5'-phosphate. The resulting ammonia molecule is channeled to the active site of PdxS. The polypeptide is Pyridoxal 5'-phosphate synthase subunit PdxT (Picrophilus torridus (strain ATCC 700027 / DSM 9790 / JCM 10055 / NBRC 100828 / KAW 2/3)).